A 193-amino-acid polypeptide reads, in one-letter code: Large ribosomal subunit protein bL9 (193 aa).

The disordered stretch occupies residues 155-193; the sequence is AEGETLTSAEAIYDIQEKPLAENQEEMNDNDANSINEQA. Polar residues predominate over residues 184–193; sequence NDANSINEQA.

This sequence belongs to the bacterial ribosomal protein bL9 family.

Its function is as follows. Binds to the 23S rRNA. This is Large ribosomal subunit protein bL9 from Bartonella quintana (strain Toulouse) (Rochalimaea quintana).